We begin with the raw amino-acid sequence, 453 residues long: Na(+)/H(+) antiporter NhaA (453 aa).

Helical transmembrane passes span 22-42, 72-92, 108-128, 137-157, 166-186, 189-209, 218-238, 316-336, 343-363, 386-406, and 424-444; these read ASLLLFAATIVAMVLANSPWA, MLAFVNDALMAVFFFVIGLEI, LLPIIAACGGMIVPVLFYMLV, GAAIPMATDIAFALAVLGLLG, IFLTALAVVDDIGGIIIIALF, GHIAFEPLLISLIVLALLYVG, LFFYIGGFIVWLLFLESGIHP, PLVNYVILPLFAFVNAGVTFG, LVNVPLAVFVGLFVGKTLGIF, LFGVSMLGGIGFTVALFIANL, and LGVFTGSFISGLCGYLVLKWV.

It belongs to the NhaA Na(+)/H(+) (TC 2.A.33) antiporter family.

Its subcellular location is the cell inner membrane. The catalysed reaction is Na(+)(in) + 2 H(+)(out) = Na(+)(out) + 2 H(+)(in). In terms of biological role, na(+)/H(+) antiporter that extrudes sodium in exchange for external protons. The protein is Na(+)/H(+) antiporter NhaA of Parabacteroides distasonis (strain ATCC 8503 / DSM 20701 / CIP 104284 / JCM 5825 / NCTC 11152).